The chain runs to 182 residues: UPF0423 protein BRA0381/BS1330_II0378 (182 aa).

The signal sequence occupies residues 1–24; the sequence is MKNLFRTAALMVPLSLALAYGAQA.

It belongs to the UPF0423 family.

The protein is UPF0423 protein BRA0381/BS1330_II0378 of Brucella suis biovar 1 (strain 1330).